Here is a 154-residue protein sequence, read N- to C-terminus: Myoglobin (154 aa).

Residues 2-148 (GLSDGEWQLV…FRNDMAAKYK (147 aa)) form the Globin domain. Serine 4 carries the post-translational modification Phosphoserine. Residue histidine 65 coordinates nitrite. Histidine 65 provides a ligand contact to O2. Threonine 68 bears the Phosphothreonine mark. Heme b is bound at residue histidine 94.

It belongs to the globin family. As to quaternary structure, monomeric.

It is found in the cytoplasm. The protein resides in the sarcoplasm. It carries out the reaction Fe(III)-heme b-[protein] + nitric oxide + H2O = Fe(II)-heme b-[protein] + nitrite + 2 H(+). The enzyme catalyses H2O2 + AH2 = A + 2 H2O. Its function is as follows. Monomeric heme protein which primary function is to store oxygen and facilitate its diffusion within muscle tissues. Reversibly binds oxygen through a pentacoordinated heme iron and enables its timely and efficient release as needed during periods of heightened demand. Depending on the oxidative conditions of tissues and cells, and in addition to its ability to bind oxygen, it also has a nitrite reductase activity whereby it regulates the production of bioactive nitric oxide. Under stress conditions, like hypoxia and anoxia, it also protects cells against reactive oxygen species thanks to its pseudoperoxidase activity. The sequence is that of Myoglobin (MB) from Lagothrix lagotricha (Brown woolly monkey).